A 139-amino-acid polypeptide reads, in one-letter code: Putative pre-16S rRNA nuclease (139 aa).

Belongs to the YqgF nuclease family.

The protein localises to the cytoplasm. In terms of biological role, could be a nuclease involved in processing of the 5'-end of pre-16S rRNA. This chain is Putative pre-16S rRNA nuclease, found in Haemophilus influenzae (strain 86-028NP).